A 298-amino-acid polypeptide reads, in one-letter code: Protoheme IX farnesyltransferase (298 aa).

8 helical membrane-spanning segments follow: residues 26 to 46 (IVIL…GGPP), 48 to 68 (LGLT…ANAI), 110 to 130 (FLVL…GLLF), 147 to 167 (IVIG…AVTG), 174 to 194 (VIMF…LALF), 220 to 240 (ILLY…TGTV), 243 to 263 (LYLW…VGLL), and 276 to 296 (TYGW…LDVT).

This sequence belongs to the UbiA prenyltransferase family. Protoheme IX farnesyltransferase subfamily. In terms of assembly, interacts with CtaA.

It is found in the cell membrane. It carries out the reaction heme b + (2E,6E)-farnesyl diphosphate + H2O = Fe(II)-heme o + diphosphate. It functions in the pathway porphyrin-containing compound metabolism; heme O biosynthesis; heme O from protoheme: step 1/1. In terms of biological role, converts heme B (protoheme IX) to heme O by substitution of the vinyl group on carbon 2 of heme B porphyrin ring with a hydroxyethyl farnesyl side group. This is Protoheme IX farnesyltransferase from Symbiobacterium thermophilum (strain DSM 24528 / JCM 14929 / IAM 14863 / T).